The chain runs to 543 residues: CTP synthase (543 aa).

The segment at 1 to 265 (MTRFIFVTGG…DQIVLDKFGL (265 aa)) is amidoligase domain. Position 13 (serine 13) interacts with CTP. Residue serine 13 participates in UTP binding. ATP-binding positions include 14–19 (SLGKGI) and aspartate 71. Residues aspartate 71 and glutamate 139 each coordinate Mg(2+). CTP contacts are provided by residues 146–148 (DIE), 186–191 (KTKPTQ), and lysine 222. UTP contacts are provided by residues 186–191 (KTKPTQ) and lysine 222. In terms of domain architecture, Glutamine amidotransferase type-1 spans 290–541 (TIAMVGKYMD…IQAAVEQNER (252 aa)). Residue glycine 351 participates in L-glutamine binding. Catalysis depends on cysteine 378, which acts as the Nucleophile; for glutamine hydrolysis. Residues 379 to 382 (LGMQ), glutamate 402, and arginine 469 contribute to the L-glutamine site. Active-site residues include histidine 514 and glutamate 516.

It belongs to the CTP synthase family. In terms of assembly, homotetramer.

The catalysed reaction is UTP + L-glutamine + ATP + H2O = CTP + L-glutamate + ADP + phosphate + 2 H(+). The enzyme catalyses L-glutamine + H2O = L-glutamate + NH4(+). It catalyses the reaction UTP + NH4(+) + ATP = CTP + ADP + phosphate + 2 H(+). It participates in pyrimidine metabolism; CTP biosynthesis via de novo pathway; CTP from UDP: step 2/2. With respect to regulation, allosterically activated by GTP, when glutamine is the substrate; GTP has no effect on the reaction when ammonia is the substrate. The allosteric effector GTP functions by stabilizing the protein conformation that binds the tetrahedral intermediate(s) formed during glutamine hydrolysis. Inhibited by the product CTP, via allosteric rather than competitive inhibition. Catalyzes the ATP-dependent amination of UTP to CTP with either L-glutamine or ammonia as the source of nitrogen. Regulates intracellular CTP levels through interactions with the four ribonucleotide triphosphates. This is CTP synthase from Saccharophagus degradans (strain 2-40 / ATCC 43961 / DSM 17024).